The following is a 201-amino-acid chain: L(+)-tartrate dehydratase subunit beta (201 aa).

Residue His-37 is part of the active site.

The protein belongs to the class-I fumarase family. Heterotetramer of two alpha and two beta subunits.

The catalysed reaction is (2R,3R)-tartrate = oxaloacetate + H2O. This chain is L(+)-tartrate dehydratase subunit beta (ttdB), found in Shigella boydii serotype 4 (strain Sb227).